A 539-amino-acid polypeptide reads, in one-letter code: Phenylacetyl-CoA ligase epaB (539 aa).

Residue 188–199 coordinates AMP; sequence RLFSSGTTGLPK. The segment at 449 to 525 is AMP-binding; that stretch reads EVEGVLRNHP…DAIPRNASGK (77 aa).

Belongs to the ATP-dependent AMP-binding enzyme family.

Its pathway is secondary metabolite biosynthesis. Phenylacetyl-CoA ligase; part of the gene cluster that mediates the biosynthesis of nigerpyrone and its derivatives carbonarone A and pestalamide A. The biosynthesis pathway begins with the polyketide assembly by epaA to form phenylacetyl triketide precursor from successive condensation of two malonyl-CoA, presumably with one phenylacetyl-CoA starter unit produced by the phenylacetyl-CoA ligase epaB. For the nigerpyrone biosynthesis, the reactive polyketide chain is released as an aldehyde through the R-domain. A nonenzymatic cyclization and dehydration may create nigerpyrone. For the biosynthesis of carbonarone A and pestalamide A, an extra methyl group is added through the C-methyltransferase domain. Several further steps involving the dehydrogenase orf1, the cytochrome P450 monooxygenase orf2 and the FAD-dependent monooxygenase orf3 are required to form a carbonarone A precursor which is converted to carbonarone A via cyclization. The O-acetyltransferase epaC could catalyze the transfer of 2-methylsuccinyl-CoA, a common intermediate in the ethylmalonyl-CoA pathway, to generate the final product pestalamide A. The sequence is that of Phenylacetyl-CoA ligase epaB from Aspergillus niger (strain ATCC MYA-4892 / CBS 513.88 / FGSC A1513).